Consider the following 758-residue polypeptide: Probable ubiquitin carboxyl-terminal hydrolase creB (758 aa).

The tract at residues 1-27 (MGSFLRSFRRDVGSSTPSVGATPAKKE) is disordered. The 412-residue stretch at 57–468 (FGMENYGNTC…CAYVLFYQET (412 aa)) folds into the USP domain. Catalysis depends on Cys66, which acts as the Nucleophile. Disordered regions lie at residues 116 to 148 (AEAQ…DSSE) and 243 to 268 (QPIP…SKTP). Residues 253–268 (TTDSSRQSISSGSKTP) are compositionally biased toward polar residues. The Proton acceptor role is filled by His419. The tract at residues 514–744 (IPVQDEPQRH…KGDRAGHGKW (231 aa)) is disordered. Pro residues predominate over residues 554 to 563 (ATPPPVPPIP). Residues 573–631 (KKSDIQSKKERAKEEKERKAAEKEMEKQRRKEQEARVKENQRREEAELKAALEASKASK) adopt a coiled-coil conformation. Basic and acidic residues-rich tracts occupy residues 573 to 650 (KKSD…DPKR) and 729 to 740 (DALKSPKGDRAG).

It belongs to the peptidase C19 family. Interacts with creA, creC and qutD.

It carries out the reaction Thiol-dependent hydrolysis of ester, thioester, amide, peptide and isopeptide bonds formed by the C-terminal Gly of ubiquitin (a 76-residue protein attached to proteins as an intracellular targeting signal).. Its function is as follows. Ubiquitin thioesterase component of the regulatory network controlling carbon source utilization through ubiquitination and deubiquitination involving creA, creB, creC, creD and acrB. Deubiquitinates the creA catabolic repressor and the quinate permease qutD. Also plays a role in response to carbon starvation and the control of extracellular proteases activity. This chain is Probable ubiquitin carboxyl-terminal hydrolase creB (creB), found in Aspergillus niger (strain ATCC MYA-4892 / CBS 513.88 / FGSC A1513).